We begin with the raw amino-acid sequence, 138 residues long: Ribulose bisphosphate carboxylase small subunit (138 aa).

This sequence belongs to the RuBisCO small chain family. As to quaternary structure, heterohexadecamer of 8 large and 8 small subunits.

It is found in the plastid. The protein resides in the chloroplast. RuBisCO catalyzes two reactions: the carboxylation of D-ribulose 1,5-bisphosphate, the primary event in carbon dioxide fixation, as well as the oxidative fragmentation of the pentose substrate in the photorespiration process. Both reactions occur simultaneously and in competition at the same active site. Although the small subunit is not catalytic it is essential for maximal activity. The sequence is that of Ribulose bisphosphate carboxylase small subunit from Cyanidium caldarium (Red alga).